The chain runs to 441 residues: UBX domain-containing protein 6 (441 aa).

The tract at residues 1-10 (MKKFFQEFKA) is mediates interaction with LMAN1. K2 carries the N-acetylalanine modification. Disordered stretches follow at residues 13–79 (KFKS…QDTI) and 87–106 (LQAEATVSGSPEAPGTNVVS). Basic and acidic residues predominate over residues 22-36 (KLKESVGEKAHKEKP). Residues 51–63 (EAQMAAAAALARL) are VCP/p97-interacting motif (VIM). Low complexity predominate over residues 52-61 (AQMAAAAALA). Residue S96 is modified to Phosphoserine. The 70-residue stretch at 175-244 (VDTIAKYLDN…DPEEFYVLSE (70 aa)) folds into the PUB domain. Residues 332 to 408 (RKYNYTLLRV…GLVPSALLTF (77 aa)) form the UBX domain.

In terms of assembly, interacts with VCP through the PUB domain (via C-terminus) and VIM motif (via N-terminus); the interaction is direct. Forms a ternary complex with CAV1 and VCP. Interacts with SYVN1. Interacts with HERPUD1. Interacts with VCPKMT. May interact with DERL1. Interacts with PLAA, VCP and YOD1; may form a complex involved in macroautophagy. Interacts with LMAN1. Enhanced expression in testis.

The protein resides in the cytoplasm. It localises to the cytosol. It is found in the membrane. The protein localises to the nucleus. Its subcellular location is the cytoskeleton. The protein resides in the microtubule organizing center. It localises to the centrosome. It is found in the early endosome membrane. The protein localises to the late endosome membrane. Its subcellular location is the lysosome membrane. May negatively regulate the ATPase activity of VCP, an ATP-driven segregase that associates with different cofactors to control a wide variety of cellular processes. As a cofactor of VCP, it may play a role in the transport of CAV1 to lysosomes for degradation. It may also play a role in endoplasmic reticulum-associated degradation (ERAD) of misfolded proteins. Together with VCP and other cofactors, it may play a role in macroautophagy, regulating for instance the clearance of damaged lysosomes. This chain is UBX domain-containing protein 6, found in Homo sapiens (Human).